Consider the following 351-residue polypeptide: Photosystem II D2 protein (351 aa).

The helical transmembrane segment at 39 to 59 (TAYLSIGGWLTGTTFVTSWYT) threads the bilayer. H116 is a binding site for chlorophyll a. A helical membrane pass occupies residues 123–139 (GFMLRQFEIARLVGIRP). Positions 128 and 141 each coordinate pheophytin a. A helical transmembrane segment spans residues 151–164 (VFVSVFLMYPLGQS). Position 196 (H196) interacts with chlorophyll a. A helical transmembrane segment spans residues 206 to 226 (GALLCAIHGATVENTLFEDGE). A plastoquinone contacts are provided by H213 and F260. H213 is a Fe cation binding site. H267 is a binding site for Fe cation. A helical transmembrane segment spans residues 277–293 (GLWTSAIGIIGLALNLR).

It belongs to the reaction center PufL/M/PsbA/D family. In terms of assembly, PSII is composed of 1 copy each of membrane proteins PsbA, PsbB, PsbC, PsbD, PsbE, PsbF, PsbH, PsbI, PsbJ, PsbK, PsbL, PsbM, PsbT, PsbX, PsbY, PsbZ, Psb30/Ycf12, peripheral proteins PsbO, CyanoQ (PsbQ), PsbU, PsbV and a large number of cofactors. It forms dimeric complexes. The D1/D2 heterodimer binds P680, chlorophylls that are the primary electron donor of PSII, and subsequent electron acceptors. It shares a non-heme iron and each subunit binds pheophytin, quinone, additional chlorophylls, carotenoids and lipids. There is also a Cl(-1) ion associated with D1 and D2, which is required for oxygen evolution. The PSII complex binds additional chlorophylls, carotenoids and specific lipids. serves as cofactor.

It is found in the cellular thylakoid membrane. The catalysed reaction is 2 a plastoquinone + 4 hnu + 2 H2O = 2 a plastoquinol + O2. Functionally, photosystem II (PSII) is a light-driven water:plastoquinone oxidoreductase that uses light energy to abstract electrons from H(2)O, generating O(2) and a proton gradient subsequently used for ATP formation. It consists of a core antenna complex that captures photons, and an electron transfer chain that converts photonic excitation into a charge separation. The D1/D2 (PsbA/PsbD) reaction center heterodimer binds P680, the primary electron donor of PSII as well as several subsequent electron acceptors. D2 is needed for assembly of a stable PSII complex. The sequence is that of Photosystem II D2 protein from Synechococcus sp. (strain CC9311).